The chain runs to 124 residues: Chemotaxis protein CheY1 (124 aa).

Residues 2-120 enclose the Response regulatory domain; the sequence is KLLVVDDSST…VLKEKLEVVL (119 aa). Aspartate 7, aspartate 8, aspartate 53, and asparagine 55 together coordinate Mg(2+). Aspartate 53 carries the 4-aspartylphosphate modification.

As to quaternary structure, interacts (when phosphorylated) with FliM. The cofactor is Mg(2+). Phosphorylated by CheAY. Dephosphorylated (inactivated) by CheZ.

The protein resides in the cytoplasm. In terms of biological role, chemotactic response regulator protein that modulates the rotation direction of bacterial flagellar motors. Plays an important role in the colonization and infection of Helicobacter pylori. Upon phosphorylation by CheA, interacts with the flagellar motor protein FliM to cause clockwise flagellar rotation and bacterial reversals, as opposed to straight swimming when CheY1 is not phosphorylated. The polypeptide is Chemotaxis protein CheY1 (Helicobacter pylori (strain ATCC 700392 / 26695) (Campylobacter pylori)).